We begin with the raw amino-acid sequence, 420 residues long: Dihydrolipoyllysine-residue succinyltransferase component of 2-oxoglutarate dehydrogenase complex (420 aa).

The region spanning 1–76 is the Lipoyl-binding domain; that stretch reads MAEVKVPELA…EVGQAVAVVG (76 aa). K42 is modified (N6-lipoyllysine). The segment at 75 to 201 is disordered; it reads VGEGQVNTSN…EKMSRRKKTA (127 aa). The segment covering 81–90 has biased composition (polar residues); it reads NTSNDSSNES. The span at 91 to 102 shows a compositional bias: basic and acidic residues; it reads SQKDEAKEKETP. Residues 103–127 show a composition bias toward polar residues; the sequence is KQSNPNSSESENTQDNSQQRINATP. In terms of domain architecture, Peripheral subunit-binding (PSBD) spans 124-160; sequence NATPSARRHARKNGVDLSEVSGKGNDVLRKDDVENSQ. Residues 149-158 are compositionally biased toward basic and acidic residues; that stretch reads DVLRKDDVEN. A compositionally biased stretch (low complexity) spans 159 to 188; the sequence is SQKSSSQTAKSESKSQNSGSKQSNNNPSKP. Catalysis depends on residues H391 and D395.

This sequence belongs to the 2-oxoacid dehydrogenase family. In terms of assembly, forms a 24-polypeptide structural core with octahedral symmetry. Part of the 2-oxoglutarate dehydrogenase (OGDH) complex composed of E1 (2-oxoglutarate dehydrogenase), E2 (dihydrolipoamide succinyltransferase) and E3 (dihydrolipoamide dehydrogenase); the complex contains multiple copies of the three enzymatic components (E1, E2 and E3). Requires (R)-lipoate as cofactor.

The enzyme catalyses N(6)-[(R)-dihydrolipoyl]-L-lysyl-[protein] + succinyl-CoA = N(6)-[(R)-S(8)-succinyldihydrolipoyl]-L-lysyl-[protein] + CoA. It functions in the pathway amino-acid degradation; L-lysine degradation via saccharopine pathway; glutaryl-CoA from L-lysine: step 6/6. Its function is as follows. E2 component of the 2-oxoglutarate dehydrogenase (OGDH) complex which catalyzes the second step in the conversion of 2-oxoglutarate to succinyl-CoA and CO(2). This Staphylococcus epidermidis (strain ATCC 12228 / FDA PCI 1200) protein is Dihydrolipoyllysine-residue succinyltransferase component of 2-oxoglutarate dehydrogenase complex (odhB).